We begin with the raw amino-acid sequence, 112 residues long: Protein NIM1-INTERACTING 3 (112 aa).

Disordered regions lie at residues 1–20 (MDRDRKRVKMEKEDDEEEKM) and 77–112 (EKAANESSSASNEYDGSKEKQEGSETNVCLDLNLSL). 2 coiled-coil regions span residues 1–35 (MDRDRKRVKMEKEDDEEEKMEKLYTVLKNAREMRK) and 69–96 (NKAEANNIEKAANESSSASNEYDGSKEK). Positions 77-89 (EKAANESSSASNE) are enriched in low complexity.

It belongs to the NPR1-interactor family. As to quaternary structure, interacts with NPR1 C-terminal region.

Its subcellular location is the nucleus. In Arabidopsis thaliana (Mouse-ear cress), this protein is Protein NIM1-INTERACTING 3.